Consider the following 1374-residue polypeptide: DNA-directed RNA polymerase subunit beta (1374 aa).

The protein belongs to the RNA polymerase beta chain family. As to quaternary structure, the RNAP catalytic core consists of 2 alpha, 1 beta, 1 beta' and 1 omega subunit. When a sigma factor is associated with the core the holoenzyme is formed, which can initiate transcription.

The enzyme catalyses RNA(n) + a ribonucleoside 5'-triphosphate = RNA(n+1) + diphosphate. Functionally, DNA-dependent RNA polymerase catalyzes the transcription of DNA into RNA using the four ribonucleoside triphosphates as substrates. This chain is DNA-directed RNA polymerase subunit beta, found in Rhodopseudomonas palustris (strain BisB5).